Here is a 131-residue protein sequence, read N- to C-terminus: Tegument protein ORF52 (131 aa).

The tract at residues 103-131 (SDGGTAKPPPGANNRRRRGASTTRAGVDD) is disordered. Residues 122–131 (ASTTRAGVDD) show a composition bias toward low complexity. At Ser-123 the chain carries Phosphoserine; by host.

It belongs to the herpesviridae BLRF2 family. Homooligomer; homooligomerizes and binds double-stranded DNA (dsDNA) cooperatively. Interacts with host CGAS. Interacts with PQBP1.

The protein resides in the host cytoplasm. Its subcellular location is the virion tegument. Functionally, plays a role in the inhibition of host innate immune system by targeting the CGAS enzymatic activity which is the principal cytosolic DNA sensor that detects invading viral DNA. Acts by inhibiting CGAS-DNA phase separation: directly binds double-stranded DNA (dsDNA) in a length dependent but sequence independent manner and is able to form DNA-induced phase separation in infected cells. DNA phase separation of ORF52 mediates disruption of liquid-like droplets in which CGAS is activated, thereby preventing CGAS activity. Targets also the HDP-RNP complex composed of DNA-PK subunits and paraspeckle proteins. This complex is a key nuclear regulator of DNA-mediated activation of innate immune response through the cGAS-STING pathway. The protein is Tegument protein ORF52 of Homo sapiens (Human).